The primary structure comprises 442 residues: Large ribosomal subunit protein mL65 (442 aa).

The protein belongs to the mitochondrion-specific ribosomal protein mL65 family. In terms of assembly, component of the mitochondrial ribosome small subunit (28S) which comprises a 12S rRNA and about 30 distinct proteins.

It is found in the mitochondrion. The protein is Large ribosomal subunit protein mL65 (Mrps30) of Mus musculus (Mouse).